The sequence spans 269 residues: NAD kinase (269 aa).

The Proton acceptor role is filled by D62. Residues 62-63 (DG), 130-131 (NE), K141, R158, D160, 171-176 (TAYAMS), A195, and Q229 contribute to the NAD(+) site.

The protein belongs to the NAD kinase family. It depends on a divalent metal cation as a cofactor.

It localises to the cytoplasm. It catalyses the reaction NAD(+) + ATP = ADP + NADP(+) + H(+). Involved in the regulation of the intracellular balance of NAD and NADP, and is a key enzyme in the biosynthesis of NADP. Catalyzes specifically the phosphorylation on 2'-hydroxyl of the adenosine moiety of NAD to yield NADP. This is NAD kinase from Methanospirillum hungatei JF-1 (strain ATCC 27890 / DSM 864 / NBRC 100397 / JF-1).